A 96-amino-acid polypeptide reads, in one-letter code: MDFNASLRKAIKTGDVLLGQNSTAECIKDGKAQMIVVAANCPSTYRTMLDEQNDVYVHTYEGSSMQLGKACGKPFMVSALAIVNAGESDIISLKRA.

It belongs to the eukaryotic ribosomal protein eL30 family.

This Methanosphaerula palustris (strain ATCC BAA-1556 / DSM 19958 / E1-9c) protein is Large ribosomal subunit protein eL30.